The chain runs to 972 residues: uncharacterized protein (972 aa).

Residues 1-21 form the signal peptide; sequence MTNMILLSAVFLSLAILETHC. Over 22-932 the chain is Extracellular; sequence ANHISTGIST…KELGEKLYHV (911 aa). The segment at 892–912 is disordered; the sequence is EPTVTTTTESPPPPTTTTRQI. Residues 933 to 953 traverse the membrane as a helical segment; sequence LFFMGVLTVSVAGGVIILSFI. Topologically, residues 954–972 are cytoplasmic; that stretch reads GCLIMRKMEDAPQKTKYSV.

The protein resides in the host membrane. This is an uncharacterized protein from Magallana gigas (Pacific oyster).